Reading from the N-terminus, the 445-residue chain is Methylenetetrahydrofolate--tRNA-(uracil-5-)-methyltransferase TrmFO (445 aa).

Residue 9 to 14 (GGGLAG) participates in FAD binding.

It belongs to the MnmG family. TrmFO subfamily. The cofactor is FAD.

It localises to the cytoplasm. The enzyme catalyses uridine(54) in tRNA + (6R)-5,10-methylene-5,6,7,8-tetrahydrofolate + NADH + H(+) = 5-methyluridine(54) in tRNA + (6S)-5,6,7,8-tetrahydrofolate + NAD(+). The catalysed reaction is uridine(54) in tRNA + (6R)-5,10-methylene-5,6,7,8-tetrahydrofolate + NADPH + H(+) = 5-methyluridine(54) in tRNA + (6S)-5,6,7,8-tetrahydrofolate + NADP(+). Its function is as follows. Catalyzes the folate-dependent formation of 5-methyl-uridine at position 54 (M-5-U54) in all tRNAs. In Aquifex aeolicus (strain VF5), this protein is Methylenetetrahydrofolate--tRNA-(uracil-5-)-methyltransferase TrmFO.